A 780-amino-acid polypeptide reads, in one-letter code: Heat shock protein 90-5, chloroplastic (780 aa).

Residues Met1–Lys60 constitute a chloroplast transit peptide. Residues Glu106, Asn110, Asp152, Met157, Ser172–Gly173, Gln196–Phe201, Thr251, and Arg441 each bind ATP. Residues Gly742 to Asp780 are disordered. Positions Ser769 to Asp780 are enriched in basic and acidic residues.

It belongs to the heat shock protein 90 family. Homodimer. Interacts with VIPP1. Interacts with P23-1. As to expression, expressed in roots, cotyledons, young leaves, mature leaves, stems, flowers, petals and siliques.

It is found in the plastid. It localises to the chloroplast stroma. Its function is as follows. Molecular chaperone required for chloroplast biogenesis. Essential for chloroplast biogenesis and maintenance, and thus for embryogenesis. May be involved in the disassembly of VIPP1 for thylakoid membrane formation and/or maintenance. Cooperates with TIC components and other molecular chaperones to drive transport of preproteins into chloroplasts and functions in the chloroplast stroma to facilitate membrane translocation during protein import into the organelle. The protein is Heat shock protein 90-5, chloroplastic of Arabidopsis thaliana (Mouse-ear cress).